Consider the following 619-residue polypeptide: Calnexin (619 aa).

The signal sequence occupies residues 1–21 (MVNRKWMYIFIQFLLVSSIRS). A Ca(2+)-binding site is contributed by Asp-109. Cysteines 152 and 186 form a disulfide. Tyr-156, Lys-158, Tyr-177, and Asp-184 together coordinate an alpha-D-glucoside. A glycan (N-linked (GlcNAc...) asparagine) is linked at Asn-203. Positions 268-401 (IFDETDLKPV…RLIDNPNYFE (134 aa)) are p domain (Extended arm). Tandem repeats lie at residues 270-282 (DETD…WDER), 287-299 (DESA…WDEN), 306-318 (DEAA…WNEE), 325-337 (DPEA…WDED), and 340-350 (GSWEAPLIDNP). 2 4 X approximate repeats regions span residues 270 to 337 (DETD…WDED) and 340 to 397 (GSWE…IDNP). A disulfide bridge links Cys-352 with Cys-358. 3 consecutive repeat copies span residues 359-369 (GTWKAPTIKNP), 373-383 (GKWIRPKISNP), and 387-397 (GKWTARLIDNP). An alpha-D-glucoside is bound at residue Glu-417. Asp-428 is a binding site for Ca(2+). Residues 481–501 (LWAVYILCVLLPLVAIGVFCF) form a helical membrane-spanning segment. The interval 538–619 (GDEEDDVNQP…AKRRTARRGD (82 aa)) is disordered. Residues 547–557 (PGPSGSQSNPE) are compositionally biased toward polar residues. Over residues 566-577 (EQQSANSSQSSA) the composition is skewed to low complexity. A glycan (N-linked (GlcNAc...) asparagine) is linked at Asn-571. A compositionally biased stretch (basic and acidic residues) spans 585-601 (HVVPENEPVKPTEEFAK). Positions 610 to 619 (AKRRTARRGD) are enriched in basic residues.

Belongs to the calreticulin family. In terms of processing, glycosylation is important for its biological activity. As to expression, expressed ubiquitously in every blastomere of the embryo up to the gastrulation stage. Expression becomes gradually restricted to the head and tail regions at the comma stage during embryogenesis. During postembryonic development, expressed prominently in the H-shaped excretory cell, in the neurons of head (including ASK and ADL) and tail (including PHA and PHB), in the dorsal and ventral nerve cords, and in the spermatheca. Expressed in the spicules of the male tail (at protein level).

Its subcellular location is the endoplasmic reticulum membrane. The protein resides in the cytoplasm. The protein localises to the perinuclear region. It localises to the cytoplasmic vesicle. Calcium-binding protein that interacts with newly synthesized monoglucosylated glycoproteins in the endoplasmic reticulum. It may act in assisting protein assembly and/or in the retention within the ER of unassembled protein subunits. It seems to play a major role in the quality control apparatus of the ER by the retention of incorrectly folded proteins. Required for embryogenesis and larval development under heat and ER stress conditions. May be important for germ cell development. Involved in neuronal necrotic cell death. The sequence is that of Calnexin (cnx-1) from Caenorhabditis elegans.